Here is a 150-residue protein sequence, read N- to C-terminus: Cytochrome c-type biogenesis protein CcmE (150 aa).

Over 1 to 9 (MRNLKKTRR) the chain is Cytoplasmic. The chain crosses the membrane as a helical; Signal-anchor for type II membrane protein span at residues 10 to 30 (IQILLVAGGALVLSTALIGYG). Topologically, residues 31 to 150 (MRDGINFFRA…VYRDPAQPEG (120 aa)) are periplasmic. Positions 123 and 127 each coordinate heme.

The protein belongs to the CcmE/CycJ family.

It is found in the cell inner membrane. Functionally, heme chaperone required for the biogenesis of c-type cytochromes. Transiently binds heme delivered by CcmC and transfers the heme to apo-cytochromes in a process facilitated by CcmF and CcmH. The chain is Cytochrome c-type biogenesis protein CcmE from Rhodobacter capsulatus (strain ATCC BAA-309 / NBRC 16581 / SB1003).